A 467-amino-acid chain; its full sequence is Glutamate--tRNA ligase (467 aa).

The 'HIGH' region signature appears at 9-19; that stretch reads PSPTGNLHIGS. Residues 237–241 carry the 'KMSKS' region motif; that stretch reads KISKR. An ATP-binding site is contributed by lysine 240.

This sequence belongs to the class-I aminoacyl-tRNA synthetase family. Glutamate--tRNA ligase type 1 subfamily. Monomer.

It localises to the cytoplasm. The catalysed reaction is tRNA(Glu) + L-glutamate + ATP = L-glutamyl-tRNA(Glu) + AMP + diphosphate. Its function is as follows. Catalyzes the attachment of glutamate to tRNA(Glu) in a two-step reaction: glutamate is first activated by ATP to form Glu-AMP and then transferred to the acceptor end of tRNA(Glu). The protein is Glutamate--tRNA ligase of Buchnera aphidicola subsp. Acyrthosiphon pisum (strain APS) (Acyrthosiphon pisum symbiotic bacterium).